The primary structure comprises 348 residues: Dihydroorotate dehydrogenase (quinone) (348 aa).

FMN is bound by residues 60-64 and Thr84; that span reads AGLDK. Lys64 lines the substrate pocket. 109–113 contributes to the substrate binding site; it reads NRMGF. FMN contacts are provided by Asn137 and Asn170. Residue Asn170 participates in substrate binding. The active-site Nucleophile is the Ser173. A substrate-binding site is contributed by Asn175. FMN contacts are provided by Lys215 and Thr243. Position 244–245 (244–245) interacts with substrate; that stretch reads NT. Residues Gly266, Gly295, and 316–317 each bind FMN; that span reads YS.

The protein belongs to the dihydroorotate dehydrogenase family. Type 2 subfamily. As to quaternary structure, monomer. FMN serves as cofactor.

The protein resides in the cell membrane. It catalyses the reaction (S)-dihydroorotate + a quinone = orotate + a quinol. Its pathway is pyrimidine metabolism; UMP biosynthesis via de novo pathway; orotate from (S)-dihydroorotate (quinone route): step 1/1. Functionally, catalyzes the conversion of dihydroorotate to orotate with quinone as electron acceptor. In Nitrosospira multiformis (strain ATCC 25196 / NCIMB 11849 / C 71), this protein is Dihydroorotate dehydrogenase (quinone).